We begin with the raw amino-acid sequence, 325 residues long: Beta-ketoacyl-[acyl-carrier-protein] synthase III (325 aa).

Active-site residues include Cys116 and His252. The tract at residues Gln253–Arg257 is ACP-binding. Asn282 is a catalytic residue.

Belongs to the thiolase-like superfamily. FabH family. In terms of assembly, homodimer.

It is found in the cytoplasm. It catalyses the reaction malonyl-[ACP] + acetyl-CoA + H(+) = 3-oxobutanoyl-[ACP] + CO2 + CoA. It participates in lipid metabolism; fatty acid biosynthesis. Its function is as follows. Catalyzes the condensation reaction of fatty acid synthesis by the addition to an acyl acceptor of two carbons from malonyl-ACP. Catalyzes the first condensation reaction which initiates fatty acid synthesis and may therefore play a role in governing the total rate of fatty acid production. Possesses both acetoacetyl-ACP synthase and acetyl transacylase activities. Its substrate specificity determines the biosynthesis of branched-chain and/or straight-chain of fatty acids. The protein is Beta-ketoacyl-[acyl-carrier-protein] synthase III of Xanthomonas euvesicatoria pv. vesicatoria (strain 85-10) (Xanthomonas campestris pv. vesicatoria).